Here is a 432-residue protein sequence, read N- to C-terminus: C2H2 type master regulator of conidiophore development brlA (432 aa).

2 disordered regions span residues 22–72 and 238–260; these read SNEC…RTPG and KQHSPTTPIRSCSLGTGSGADTP. A compositionally biased stretch (low complexity) spans 29 to 44; it reads TSSFSPLESPTPTPTS. Polar residues-rich tracts occupy residues 62-72 and 238-252; these read LPNNTYERTPG and KQHSPTTPIRSCSLG. 2 consecutive C2H2-type zinc fingers follow at residues 320–344 and 350–375; these read FKCKEPGCNGRFKRQEHLKRHMKSH and HVCWVPGCHRAFSRSDNLNAHYTKTH. The disordered stretch occupies residues 388 to 432; it reads LDENSPDYDPEFRGQLTPDGRPIYGSKLDDPIPGAGDMSLDGWDE.

Its subcellular location is the nucleus. BrlA, abaA and wetA are pivotal regulators of conidiophore development and conidium maturation. They act individually and together to regulate their own expression and that of numerous other sporulation-specific genes. Binds promoters of target genes at brlA response elements (BREs) containing the conserved sequence 5'-(C/A)(A/G)AGGG(G/A)-3'. Controls the expression of the conidiophore-specific phenol oxidase ivoB. Controls the expression of the hydrophobin rodA. Mediates the developmental switch from the indeterminate, apical growth pattern of vegetative cells to the budding growth pattern of conidiophores. Expression of brlA leads to activation of abaA, wetA and stuA, cessation of vegetative growth, cellular vacuolization and spore formation. This chain is C2H2 type master regulator of conidiophore development brlA, found in Emericella nidulans (strain FGSC A4 / ATCC 38163 / CBS 112.46 / NRRL 194 / M139) (Aspergillus nidulans).